Here is a 145-residue protein sequence, read N- to C-terminus: Inner membrane protein YiaA (145 aa).

Residues 1 to 12 (MDNKISTYSPAF) are Cytoplasmic-facing. The chain crosses the membrane as a helical span at residues 13-32 (SIVSWIALVGGIVTYLLGLW). Over 33 to 41 (NAEMQLNEK) the chain is Periplasmic. Residues 42–59 (GYYFAVLVLGLFSAASYQ) traverse the membrane as a helical segment. Over 60–71 (KTVRDKYEGIPT) the chain is Cytoplasmic. Residues 72–94 (TSIYYMTCLTVFIISVALLMVGL) form a helical membrane-spanning segment. The Periplasmic segment spans residues 95–98 (WNAT). Residues 99 to 121 (LLLSEKGFYGLAFFLSLFGAVAV) traverse the membrane as a helical segment. At 122–145 (QKNIRDAGINPPKETQVTQEEYSE) the chain is on the cytoplasmic side.

Its subcellular location is the cell inner membrane. In Escherichia coli (strain K12), this protein is Inner membrane protein YiaA (yiaA).